The following is a 788-amino-acid chain: Protein HHLF1 (788 aa).

Disordered stretches follow at residues methionine 1–histidine 82, threonine 366–alanine 385, and isoleucine 609–proline 663. Residues arginine 16 to glycine 25 are compositionally biased toward gly residues. A compositionally biased stretch (low complexity) spans valine 26–glycine 56. Residues serine 74 to tyrosine 248 are RNA-binding. Residues leucine 650 to proline 659 show a composition bias toward basic and acidic residues. The interval leucine 671–glutamine 788 is interaction with host EIF2AK2/PKR.

Belongs to the herpesviridae US22 family. As to quaternary structure, interacts with host EIF2AK2/PKR; this interaction retains EIF2AK2 to the host nucleus and prevents its activation. Interaction (via N-terminus) with host BECN1; this interaction inhibits host autophagy. Interacts with the viral DNA polymerase accessory subunit UL44. Interacts with host HSPA5.

It localises to the virion. It is found in the host cytoplasm. Its subcellular location is the host nucleus. In terms of biological role, inhibits the establishment of the antiviral state and the integrated stress response (ISR) in the infected cell. Prevents the phosphorylation of the host eukaryotic translation initiation factor eIF-2alpha/EIF2S1 and thus the shutoff of viral and cellular protein synthesis by directly interacting with EIF2AK2/PKR. Prevents stress granule formation in response to eIF-2alpha/EIF2S1 phosphorylation, thereby rescuing viral replication and protein synthesis. Also inhibits host autophagy by interacting with host Beclin-1/BECN1. In Homo sapiens (Human), this protein is Protein HHLF1 (TRS1).